The following is a 291-amino-acid chain: D-alanine--D-alanine ligase (291 aa).

An ATP-grasp domain is found at 99-291; that stretch reads KRIVKSLGIN…FKKLISIIIT (193 aa). 125–179 contributes to the ATP binding site; that stretch reads EWNKFPAVVKPVREGSSVGLKIVESLEELKEYALDLLKKTERVMVEEFVEGRDMT. The Mg(2+) site is built by Asp245, Glu258, and Asn260.

The protein belongs to the D-alanine--D-alanine ligase family. Requires Mg(2+) as cofactor. It depends on Mn(2+) as a cofactor.

It localises to the cytoplasm. It carries out the reaction 2 D-alanine + ATP = D-alanyl-D-alanine + ADP + phosphate + H(+). It functions in the pathway cell wall biogenesis; peptidoglycan biosynthesis. Functionally, cell wall formation. In Aquifex aeolicus (strain VF5), this protein is D-alanine--D-alanine ligase.